A 271-amino-acid polypeptide reads, in one-letter code: Mannosyl-3-phosphoglycerate phosphatase (271 aa).

Catalysis depends on aspartate 13, which acts as the Nucleophile. Mg(2+) is bound by residues aspartate 13, aspartate 15, and aspartate 214.

Belongs to the HAD-like hydrolase superfamily. MPGP family. It depends on Mg(2+) as a cofactor.

It is found in the cytoplasm. It carries out the reaction 2-O-(alpha-D-mannosyl)-3-phosphoglycerate + H2O = (2R)-2-O-(alpha-D-mannosyl)-glycerate + phosphate. The sequence is that of Mannosyl-3-phosphoglycerate phosphatase from Escherichia coli (strain SE11).